Here is a 368-residue protein sequence, read N- to C-terminus: Glutamate 5-kinase (368 aa).

Lys9 contributes to the ATP binding site. 3 residues coordinate substrate: Ser49, Asp136, and Asn148. Residues 168-169 and 210-216 each bind ATP; these read TD and TGGMMTK. The PUA domain occupies 275-353; sequence AGIITIDNGA…ADIENVLGYE (79 aa).

This sequence belongs to the glutamate 5-kinase family.

It localises to the cytoplasm. The catalysed reaction is L-glutamate + ATP = L-glutamyl 5-phosphate + ADP. The protein operates within amino-acid biosynthesis; L-proline biosynthesis; L-glutamate 5-semialdehyde from L-glutamate: step 1/2. In terms of biological role, catalyzes the transfer of a phosphate group to glutamate to form L-glutamate 5-phosphate. The polypeptide is Glutamate 5-kinase (Haemophilus influenzae (strain ATCC 51907 / DSM 11121 / KW20 / Rd)).